A 429-amino-acid polypeptide reads, in one-letter code: Argininosuccinate lyase (429 aa).

The protein belongs to the lyase 1 family. Argininosuccinate lyase subfamily.

It is found in the cytoplasm. The enzyme catalyses 2-(N(omega)-L-arginino)succinate = fumarate + L-arginine. It functions in the pathway amino-acid biosynthesis; L-arginine biosynthesis; L-arginine from L-ornithine and carbamoyl phosphate: step 3/3. The protein is Argininosuccinate lyase of Pyrobaculum neutrophilum (strain DSM 2338 / JCM 9278 / NBRC 100436 / V24Sta) (Thermoproteus neutrophilus).